Reading from the N-terminus, the 264-residue chain is MSFDINWNKINEDSTINQRARAFLNEHLESLQLPSYVSNIKMTDFKLGTIPPRITLKQIDNPLDDFYEALRLEGASIGGRDTDVQFLMEVDYKGDMLIELSAELVLNYPSPNFMQLPVKLTISDIGIHSLCLVAYLQRQLFISFLCDVSDPALDNVESPLDSNGPAFLGSKAVERISLIRSIKIQTEIGPQDLSEGTILRSVGKLEQFLSDVFKNLLRKEAAWPSWINLDFNEDVSADVESSSSAEESLPHRDDAQDFSADARA.

Residues 1–232 (MSFDINWNKI…WPSWINLDFN (232 aa)) enclose the SMP-LTD domain. The disordered stretch occupies residues 240–264 (ESSSSAEESLPHRDDAQDFSADARA). Residues 248-264 (SLPHRDDAQDFSADARA) are compositionally biased toward basic and acidic residues.

Belongs to the MDM12 family. Component of the ER-mitochondria encounter structure (ERMES) or MDM complex, composed of MMM1, MDM10, MDM12 and MDM34. An MMM1 homodimer associates with one molecule of MDM12 on each side in a pairwise head-to-tail manner, and the SMP-LTD domains of MMM1 and MDM12 generate a continuous hydrophobic tunnel for phospholipid trafficking.

Its subcellular location is the mitochondrion outer membrane. It localises to the endoplasmic reticulum membrane. In terms of biological role, component of the ERMES/MDM complex, which serves as a molecular tether to connect the endoplasmic reticulum (ER) and mitochondria. Components of this complex are involved in the control of mitochondrial shape and protein biogenesis, and function in nonvesicular lipid trafficking between the ER and mitochondria. MDM12 is required for the interaction of the ER-resident membrane protein MMM1 and the outer mitochondrial membrane-resident beta-barrel protein MDM10. The MDM12-MMM1 subcomplex functions in the major beta-barrel assembly pathway that is responsible for biogenesis of all mitochondrial outer membrane beta-barrel proteins, and acts in a late step after the SAM complex. The MDM10-MDM12-MMM1 subcomplex further acts in the TOM40-specific pathway after the action of the MDM12-MMM1 complex. Essential for establishing and maintaining the structure of mitochondria and maintenance of mtDNA nucleoids. The sequence is that of Mitochondrial distribution and morphology protein 12 from Eremothecium gossypii (strain ATCC 10895 / CBS 109.51 / FGSC 9923 / NRRL Y-1056) (Yeast).